A 701-amino-acid polypeptide reads, in one-letter code: Elongation factor G 1 (701 aa).

Residues Glu-8–Leu-290 enclose the tr-type G domain. Residues Ala-17–Thr-24, Asp-88–His-92, and Asn-142–Asp-145 each bind GTP.

Belongs to the TRAFAC class translation factor GTPase superfamily. Classic translation factor GTPase family. EF-G/EF-2 subfamily.

Its subcellular location is the cytoplasm. In terms of biological role, catalyzes the GTP-dependent ribosomal translocation step during translation elongation. During this step, the ribosome changes from the pre-translocational (PRE) to the post-translocational (POST) state as the newly formed A-site-bound peptidyl-tRNA and P-site-bound deacylated tRNA move to the P and E sites, respectively. Catalyzes the coordinated movement of the two tRNA molecules, the mRNA and conformational changes in the ribosome. The sequence is that of Elongation factor G 1 from Paraburkholderia xenovorans (strain LB400).